The sequence spans 124 residues: Phosphoribosyl-AMP cyclohydrolase (124 aa).

Asp82 is a Mg(2+) binding site. Cys83 contacts Zn(2+). Positions 84 and 86 each coordinate Mg(2+). Zn(2+) contacts are provided by Cys99 and Cys106.

It belongs to the PRA-CH family. As to quaternary structure, homodimer. The cofactor is Mg(2+). It depends on Zn(2+) as a cofactor.

It is found in the cytoplasm. The enzyme catalyses 1-(5-phospho-beta-D-ribosyl)-5'-AMP + H2O = 1-(5-phospho-beta-D-ribosyl)-5-[(5-phospho-beta-D-ribosylamino)methylideneamino]imidazole-4-carboxamide. It participates in amino-acid biosynthesis; L-histidine biosynthesis; L-histidine from 5-phospho-alpha-D-ribose 1-diphosphate: step 3/9. Functionally, catalyzes the hydrolysis of the adenine ring of phosphoribosyl-AMP. This is Phosphoribosyl-AMP cyclohydrolase from Rhizorhabdus wittichii (strain DSM 6014 / CCUG 31198 / JCM 15750 / NBRC 105917 / EY 4224 / RW1) (Sphingomonas wittichii).